Reading from the N-terminus, the 413-residue chain is Histidine--tRNA ligase (413 aa).

The protein belongs to the class-II aminoacyl-tRNA synthetase family. Homodimer.

It is found in the cytoplasm. The catalysed reaction is tRNA(His) + L-histidine + ATP = L-histidyl-tRNA(His) + AMP + diphosphate + H(+). In Fusobacterium nucleatum subsp. nucleatum (strain ATCC 25586 / DSM 15643 / BCRC 10681 / CIP 101130 / JCM 8532 / KCTC 2640 / LMG 13131 / VPI 4355), this protein is Histidine--tRNA ligase.